A 208-amino-acid polypeptide reads, in one-letter code: Protein GrpE (208 aa).

A compositionally biased stretch (basic and acidic residues) spans 1 to 25 (MVDNKDFNEELKENIQEELDNETKA). The disordered stretch occupies residues 1-38 (MVDNKDFNEELKENIQEELDNETKAENPNIDEEVEEVS). The span at 29-38 (NIDEEVEEVS) shows a compositional bias: acidic residues.

The protein belongs to the GrpE family. As to quaternary structure, homodimer.

The protein resides in the cytoplasm. Its function is as follows. Participates actively in the response to hyperosmotic and heat shock by preventing the aggregation of stress-denatured proteins, in association with DnaK and GrpE. It is the nucleotide exchange factor for DnaK and may function as a thermosensor. Unfolded proteins bind initially to DnaJ; upon interaction with the DnaJ-bound protein, DnaK hydrolyzes its bound ATP, resulting in the formation of a stable complex. GrpE releases ADP from DnaK; ATP binding to DnaK triggers the release of the substrate protein, thus completing the reaction cycle. Several rounds of ATP-dependent interactions between DnaJ, DnaK and GrpE are required for fully efficient folding. The chain is Protein GrpE from Clostridium perfringens (strain 13 / Type A).